The chain runs to 237 residues: Tetraspanin-8 (237 aa).

Residues 1–9 are Cytoplasmic-facing; it reads MAGVSACIK. Residues 10-33 traverse the membrane as a helical segment; sequence YSMFTFNFLFWLCGILILALAIWV. The Extracellular portion of the chain corresponds to 34–57; it reads RVSNDSQAIFGSEDVGSSSYVAVD. Residues 58–72 form a helical membrane-spanning segment; the sequence is ILIAVGAIIMILGFL. At 73-83 the chain is on the cytoplasmic side; it reads GCCGAIKESRC. A helical membrane pass occupies residues 84 to 109; the sequence is MLLLFFIGLLLILLLQVATGILGAVF. Over 110–205 the chain is Extracellular; that stretch reads KSKSDRIVNE…SFIKDFLAKN (96 aa). The N-linked (GlcNAc...) asparagine glycan is linked to asparagine 118. A helical transmembrane segment spans residues 206–230; that stretch reads LIIVIGISFGLAVIEILGLVFSMVL. Residues 231–237 lie on the Cytoplasmic side of the membrane; the sequence is YCQIGNK.

This sequence belongs to the tetraspanin (TM4SF) family. As to quaternary structure, forms homooligomers. Interacts with MEP1B. Interacts with integrin alpha3/ITGA3. Interacts with RICTOR and MTOR. Interacts with ADAM17. Interacts with ECE1. In terms of tissue distribution, gastric, colon, rectal, and pancreatic carcinomas.

It is found in the cell membrane. Its function is as follows. Structural component of specialized membrane microdomains known as tetraspanin-enriched microdomains (TERMs), which act as platforms for receptor clustering and signaling. Participates thereby in diverse biological functions such as cell signal transduction, migration and protein trafficking. Promotes ADAM17-mediated TNF-alpha processing through recruitment of ADAM17 to tetraspanin-enriched micro-domains (TEMs). Forms a complex with RICTOR and integrin alpha3/ITGA3 to mediate mTORC2 activation and AKT1 phosphorylation leading to cell migration. Reduces apoptosis and autophagy induced by high glucose levels through forming a complex with mTOR and RICTOR. Contributes to the maintenance of intestinal epithelial barrier and plays a role in the regulation of intestine inflammation by switching interferon gamma receptor 1/IFNGR1 from clathrin-dependent to lipid raft-dependent endocytosis route to limit STAT1 activation magnitude and duration. Acts as a modulator of the endothelin axis by associating with endothelin converting enzyme ECE1 and regulating its activity of conversion of the endothelin-1 precursor to endothelin. In Homo sapiens (Human), this protein is Tetraspanin-8 (TSPAN8).